Consider the following 523-residue polypeptide: Mogroside I-A1 synthase (523 aa).

His39 functions as the Proton acceptor in the catalytic mechanism. Catalysis depends on Asp136, which acts as the Charge relay. 8 residues coordinate UDP-alpha-D-glucose: Ser311, Gln374, Trp392, Asn393, Ser394, Glu397, Asp413, and Gln414.

It belongs to the UDP-glycosyltransferase family. In terms of tissue distribution, highly expressed in young fruits 15 and 34 days after anthesis (15-DAA and 34-DAA).

The enzyme catalyses mogrol + UDP-alpha-D-glucose = mogroside I-A1 + UDP + H(+). The catalysed reaction is mogroside I-A1 + UDP-alpha-D-glucose = mogroside IIE + UDP + H(+). It carries out the reaction mogroside IE + UDP-alpha-D-glucose = mogroside IIE + UDP + H(+). It catalyses the reaction mogroside II-A1 + UDP-alpha-D-glucose = mogroside IIIX + UDP + H(+). The enzyme catalyses mogroside II-A + UDP-alpha-D-glucose = mogroside III + UDP + H(+). The catalysed reaction is mogroside IIE + UDP-alpha-D-glucose = mogroside III-C3(1-&gt;6) + UDP + H(+). It carries out the reaction mogroside III + UDP-alpha-D-glucose = isomogroside IV + UDP + H(+). It catalyses the reaction mogroside III + UDP-alpha-D-glucose = mogroside IV + UDP + H(+). The enzyme catalyses mogroside IIIX + UDP-alpha-D-glucose = mogroside IVA + UDP + H(+). The catalysed reaction is siamenoside I + UDP-alpha-D-glucose = isomogroside V + UDP + H(+). Its pathway is secondary metabolite biosynthesis; terpenoid biosynthesis. Functionally, UDP-glycosyltransferase involved in the biosynthesis of cucurbitacin and mogroside tetracyclic triterpene natural products (e.g. siamenoside I and mogrosides IV, V and VI). Cucurbitacins have cytotoxic properties and exhibit deterrent taste as a defense barrier against herbivores. Mogrosides are nonsugar highly oxygenated compounds used as high-intensity zero-calorie sweeteners; they also possess pharmacological properties such as regulating immunity, lowering blood sugar and lipid levels, protecting the liver, and acting as antioxidants and antitumor agents. Catalyzes the C24 primary glucosylation of mogrol and mogroside I-E1, and the C3 primary glucosylation of mogroside I-A1, mogroside II-A1 and mogroside II-A. Also supports branching glucosylations of mogroside II-E, mogroside III, mogroside IIIx and siamenoside I. The chain is Mogroside I-A1 synthase from Siraitia grosvenorii (Monk's fruit).